We begin with the raw amino-acid sequence, 565 residues long: Glycine--tRNA ligase (565 aa).

2 residues coordinate substrate: Arg98 and Glu164. Residues 196–198 (RNE), 206–211 (IRLREF), 323–324 (EI), and 440–443 (GIDR) contribute to the ATP site. 211–215 (FTQAE) provides a ligand contact to substrate. 436–440 (EPSFG) serves as a coordination point for substrate.

Belongs to the class-II aminoacyl-tRNA synthetase family.

The protein resides in the cytoplasm. It carries out the reaction tRNA(Gly) + glycine + ATP = glycyl-tRNA(Gly) + AMP + diphosphate. Its function is as follows. Catalyzes the attachment of glycine to tRNA(Gly). The polypeptide is Glycine--tRNA ligase (Methanothermobacter thermautotrophicus (strain ATCC 29096 / DSM 1053 / JCM 10044 / NBRC 100330 / Delta H) (Methanobacterium thermoautotrophicum)).